We begin with the raw amino-acid sequence, 351 residues long: Mediator of RNA polymerase II transcription subunit 18 (351 aa).

The disordered stretch occupies residues Gly153–Ser231. The span at Asn163–Asp204 shows a compositional bias: basic and acidic residues. Over residues Asn205 to Asn216 the composition is skewed to acidic residues. Residues Pro217–Ser231 are compositionally biased toward polar residues.

Belongs to the Mediator complex subunit 18 family. As to quaternary structure, component of the Mediator complex.

The protein resides in the nucleus. Component of the Mediator complex, a coactivator involved in the regulated transcription of nearly all RNA polymerase II-dependent genes. Mediator functions as a bridge to convey information from gene-specific regulatory proteins to the basal RNA polymerase II transcription machinery. Mediator is recruited to promoters by direct interactions with regulatory proteins and serves as a scaffold for the assembly of a functional preinitiation complex with RNA polymerase II and the general transcription factors. The chain is Mediator of RNA polymerase II transcription subunit 18 (SRB5) from Candida albicans (strain SC5314 / ATCC MYA-2876) (Yeast).